The sequence spans 327 residues: Aspartate--ammonia ligase (327 aa).

This sequence belongs to the class-II aminoacyl-tRNA synthetase family. AsnA subfamily.

The protein resides in the cytoplasm. It carries out the reaction L-aspartate + NH4(+) + ATP = L-asparagine + AMP + diphosphate + H(+). It participates in amino-acid biosynthesis; L-asparagine biosynthesis; L-asparagine from L-aspartate (ammonia route): step 1/1. This Bacillus cereus (strain G9842) protein is Aspartate--ammonia ligase.